The following is a 347-amino-acid chain: Protein phosphatase 2C homolog 1 (347 aa).

The tract at residues 1 to 41 is disordered; that stretch reads MKGSHPNAGSLLEPLHKLNPFSENSTSGHRKNASDHSADGE. Positions 32 to 41 are enriched in basic and acidic residues; that stretch reads NASDHSADGE. Residues 71–323 enclose the PPM-type phosphatase domain; it reads LAGLMEDKNQ…DNITCIVVNL (253 aa). Mn(2+)-binding residues include Asp-109, Gly-110, Asp-275, and Asp-314.

The protein belongs to the PP2C family. In terms of assembly, monomer. It depends on Mg(2+) as a cofactor. Mn(2+) serves as cofactor.

It carries out the reaction O-phospho-L-seryl-[protein] + H2O = L-seryl-[protein] + phosphate. The catalysed reaction is O-phospho-L-threonyl-[protein] + H2O = L-threonyl-[protein] + phosphate. In terms of biological role, serine and threonine phosphatase. Has a specialized role in the heat shock response. May be responsible for the dephosphorylation of hsp90. This chain is Protein phosphatase 2C homolog 1 (ptc1), found in Schizosaccharomyces pombe (strain 972 / ATCC 24843) (Fission yeast).